A 238-amino-acid chain; its full sequence is Transmembrane protein 127 (238 aa).

Residue methionine 1 is modified to N-acetylmethionine. The segment covering 1–11 (MYAPGGAGLPG) has biased composition (gly residues). The disordered stretch occupies residues 1–27 (MYAPGGAGLPGGRRRRSPGGSALPKQP). Serine 17 carries the phosphoserine modification. 3 consecutive transmembrane segments (helical) span residues 96–116 (IAAF…LDVF), 130–150 (AFAH…SYWA), and 169–189 (VYVT…ASIL).

Belongs to the TMEM127 family. In terms of tissue distribution, widely expressed.

The protein resides in the cell membrane. Its subcellular location is the cytoplasm. Its function is as follows. Controls cell proliferation acting as a negative regulator of TOR signaling pathway mediated by mTORC1. May act as a tumor suppressor. This is Transmembrane protein 127 (TMEM127) from Homo sapiens (Human).